Consider the following 262-residue polypeptide: Thiazole synthase (262 aa).

Lys-104 (schiff-base intermediate with DXP) is an active-site residue. Residues Gly-165, 191–192 (AG), and 213–214 (NT) contribute to the 1-deoxy-D-xylulose 5-phosphate site.

This sequence belongs to the ThiG family. In terms of assembly, homotetramer. Forms heterodimers with either ThiH or ThiS.

Its subcellular location is the cytoplasm. It carries out the reaction [ThiS sulfur-carrier protein]-C-terminal-Gly-aminoethanethioate + 2-iminoacetate + 1-deoxy-D-xylulose 5-phosphate = [ThiS sulfur-carrier protein]-C-terminal Gly-Gly + 2-[(2R,5Z)-2-carboxy-4-methylthiazol-5(2H)-ylidene]ethyl phosphate + 2 H2O + H(+). Its pathway is cofactor biosynthesis; thiamine diphosphate biosynthesis. Its function is as follows. Catalyzes the rearrangement of 1-deoxy-D-xylulose 5-phosphate (DXP) to produce the thiazole phosphate moiety of thiamine. Sulfur is provided by the thiocarboxylate moiety of the carrier protein ThiS. In vitro, sulfur can be provided by H(2)S. The polypeptide is Thiazole synthase (Alkalilimnicola ehrlichii (strain ATCC BAA-1101 / DSM 17681 / MLHE-1)).